Here is a 636-residue protein sequence, read N- to C-terminus: Probable potassium transport system protein Kup (636 aa).

Helical transmembrane passes span 22-42, 64-84, 115-135, 150-170, 182-202, 220-240, 261-281, 293-313, 351-371, 383-403, 408-428, and 433-453; these read VGLLVAAVGVVYGDIGTSPLY, ILSLILWSLLWVVSFKYVMFI, LMVICGLIGASLFYGDSMITP, FDGIDHWVVPISLVVLVALFL, LFGPIMVTWFLALGALGVHGI, FFVVHPGIGVAILGAVVLALT, WFILVLPALVLNYFGQGALLL, LLAPGWALLPLVGLATMATVI, IYIGAVNWTLMVGVVLLVIGF, VAVTGTMLITTVLVSAVMLLL, PLLAVPILVGFLLVDGLFFAA, and IAQGGAFPVLAGGVLYLLMST.

It belongs to the HAK/KUP transporter (TC 2.A.72) family.

It is found in the cell inner membrane. It carries out the reaction K(+)(in) + H(+)(in) = K(+)(out) + H(+)(out). Transport of potassium into the cell. Likely operates as a K(+):H(+) symporter. The chain is Probable potassium transport system protein Kup from Pseudomonas putida (strain ATCC 47054 / DSM 6125 / CFBP 8728 / NCIMB 11950 / KT2440).